The sequence spans 144 residues: 3-dehydroquinate dehydratase (144 aa).

Tyr22 serves as the catalytic Proton acceptor. Substrate-binding residues include Asn73, His79, and Asp86. His99 (proton donor) is an active-site residue. Residues 100–101 (LS) and Arg110 each bind substrate.

This sequence belongs to the type-II 3-dehydroquinase family. As to quaternary structure, homododecamer.

The catalysed reaction is 3-dehydroquinate = 3-dehydroshikimate + H2O. It functions in the pathway metabolic intermediate biosynthesis; chorismate biosynthesis; chorismate from D-erythrose 4-phosphate and phosphoenolpyruvate: step 3/7. Functionally, catalyzes a trans-dehydration via an enolate intermediate. The polypeptide is 3-dehydroquinate dehydratase (Pelotomaculum thermopropionicum (strain DSM 13744 / JCM 10971 / SI)).